Reading from the N-terminus, the 299-residue chain is 4-diphosphocytidyl-2-C-methyl-D-erythritol kinase (299 aa).

Residue K18 is part of the active site. ATP is bound at residue 104-114 (PIASGIGGGSS). Residue D146 is part of the active site.

Belongs to the GHMP kinase family. IspE subfamily.

The enzyme catalyses 4-CDP-2-C-methyl-D-erythritol + ATP = 4-CDP-2-C-methyl-D-erythritol 2-phosphate + ADP + H(+). Its pathway is isoprenoid biosynthesis; isopentenyl diphosphate biosynthesis via DXP pathway; isopentenyl diphosphate from 1-deoxy-D-xylulose 5-phosphate: step 3/6. In terms of biological role, catalyzes the phosphorylation of the position 2 hydroxy group of 4-diphosphocytidyl-2C-methyl-D-erythritol. This Brucella melitensis biotype 1 (strain ATCC 23456 / CCUG 17765 / NCTC 10094 / 16M) protein is 4-diphosphocytidyl-2-C-methyl-D-erythritol kinase.